Here is a 121-residue protein sequence, read N- to C-terminus: Small ribosomal subunit protein bS6 (121 aa).

This sequence belongs to the bacterial ribosomal protein bS6 family.

Its function is as follows. Binds together with bS18 to 16S ribosomal RNA. The sequence is that of Small ribosomal subunit protein bS6 (rpsF) from Rickettsia prowazekii (strain Madrid E).